A 217-amino-acid polypeptide reads, in one-letter code: Glycerol-3-phosphate acyltransferase (217 aa).

Transmembrane regions (helical) follow at residues 1 to 21 (MAWA…SIPT), 54 to 74 (TAAI…VGGV), 84 to 104 (AIVP…AAIL), 126 to 146 (VLLV…LFML), and 165 to 185 (LLML…LAGI).

It belongs to the PlsY family. As to quaternary structure, probably interacts with PlsX.

The protein localises to the cell inner membrane. It catalyses the reaction an acyl phosphate + sn-glycerol 3-phosphate = a 1-acyl-sn-glycero-3-phosphate + phosphate. It participates in lipid metabolism; phospholipid metabolism. Catalyzes the transfer of an acyl group from acyl-phosphate (acyl-PO(4)) to glycerol-3-phosphate (G3P) to form lysophosphatidic acid (LPA). This enzyme utilizes acyl-phosphate as fatty acyl donor, but not acyl-CoA or acyl-ACP. In Rippkaea orientalis (strain PCC 8801 / RF-1) (Cyanothece sp. (strain PCC 8801)), this protein is Glycerol-3-phosphate acyltransferase.